Consider the following 496-residue polypeptide: Maturase K (496 aa).

This sequence belongs to the intron maturase 2 family. MatK subfamily.

Its subcellular location is the plastid. It is found in the chloroplast. In terms of biological role, usually encoded in the trnK tRNA gene intron. Probably assists in splicing its own and other chloroplast group II introns. The sequence is that of Maturase K from Paeonia peregrina (Common peony).